A 150-amino-acid chain; its full sequence is Lipoprotein signal peptidase (150 aa).

The next 2 helical transmembrane spans lie at 59–79 (VFVG…RYLP) and 84–101 (LLRL…GNLI). Catalysis depends on residues Asp-111 and Asp-125. The helical transmembrane segment at 117 to 137 (IWPVFNLADMAIVFGVIILCW) threads the bilayer.

This sequence belongs to the peptidase A8 family.

The protein resides in the cell membrane. The enzyme catalyses Release of signal peptides from bacterial membrane prolipoproteins. Hydrolyzes -Xaa-Yaa-Zaa-|-(S,diacylglyceryl)Cys-, in which Xaa is hydrophobic (preferably Leu), and Yaa (Ala or Ser) and Zaa (Gly or Ala) have small, neutral side chains.. Its pathway is protein modification; lipoprotein biosynthesis (signal peptide cleavage). Functionally, this protein specifically catalyzes the removal of signal peptides from prolipoproteins. The sequence is that of Lipoprotein signal peptidase from Moorella thermoacetica (strain ATCC 39073 / JCM 9320).